Here is a 202-residue protein sequence, read N- to C-terminus: Orotate phosphoribosyltransferase (202 aa).

5-phospho-alpha-D-ribose 1-diphosphate-binding positions include K93 and 113–121; that span reads EDIITTGGS. Orotate-binding residues include T117 and R145.

The protein belongs to the purine/pyrimidine phosphoribosyltransferase family. PyrE subfamily. In terms of assembly, homodimer. Mg(2+) is required as a cofactor.

The catalysed reaction is orotidine 5'-phosphate + diphosphate = orotate + 5-phospho-alpha-D-ribose 1-diphosphate. It functions in the pathway pyrimidine metabolism; UMP biosynthesis via de novo pathway; UMP from orotate: step 1/2. In terms of biological role, catalyzes the transfer of a ribosyl phosphate group from 5-phosphoribose 1-diphosphate to orotate, leading to the formation of orotidine monophosphate (OMP). In Campylobacter curvus (strain 525.92), this protein is Orotate phosphoribosyltransferase.